Here is a 366-residue protein sequence, read N- to C-terminus: Anhydro-N-acetylmuramic acid kinase (366 aa).

10-17 provides a ligand contact to ATP; that stretch reads GTSMDGID.

This sequence belongs to the anhydro-N-acetylmuramic acid kinase family.

The enzyme catalyses 1,6-anhydro-N-acetyl-beta-muramate + ATP + H2O = N-acetyl-D-muramate 6-phosphate + ADP + H(+). The protein operates within amino-sugar metabolism; 1,6-anhydro-N-acetylmuramate degradation. Its pathway is cell wall biogenesis; peptidoglycan recycling. In terms of biological role, catalyzes the specific phosphorylation of 1,6-anhydro-N-acetylmuramic acid (anhMurNAc) with the simultaneous cleavage of the 1,6-anhydro ring, generating MurNAc-6-P. Is required for the utilization of anhMurNAc either imported from the medium or derived from its own cell wall murein, and thus plays a role in cell wall recycling. The polypeptide is Anhydro-N-acetylmuramic acid kinase (Legionella pneumophila (strain Lens)).